The following is a 219-amino-acid chain: Transmembrane protein 17A (219 aa).

N-linked (GlcNAc...) asparagine glycans are attached at residues Asn-18 and Asn-27. A run of 4 helical transmembrane segments spans residues 56–76, 83–103, 121–141, and 153–173; these read MMLY…LLML, LPVY…IFEV, LAGF…FFIT, and AVHS…FLAL.

Belongs to the TMEM17 family. In terms of assembly, part of the tectonic-like complex (also named B9 complex).

It is found in the cell projection. The protein localises to the cilium membrane. Functionally, transmembrane component of the tectonic-like complex, a complex localized at the transition zone of primary cilia and acting as a barrier that prevents diffusion of transmembrane proteins between the cilia and plasma membranes. Required for ciliogenesis and sonic hedgehog/SHH signaling. The polypeptide is Transmembrane protein 17A (tmem17a) (Danio rerio (Zebrafish)).